The primary structure comprises 113 residues: Nucleoid-associated protein FMG_0513 (113 aa).

The segment at 1–44 (MGNKFRGGMPGMGNMGNMMKQMQKMQRQMEETQKRLEETEVTAT) is disordered. Over residues 15 to 26 (MGNMMKQMQKMQ) the composition is skewed to low complexity. The segment covering 27–38 (RQMEETQKRLEE) has biased composition (basic and acidic residues).

The protein belongs to the YbaB/EbfC family. In terms of assembly, homodimer.

Its subcellular location is the cytoplasm. The protein localises to the nucleoid. Its function is as follows. Binds to DNA and alters its conformation. May be involved in regulation of gene expression, nucleoid organization and DNA protection. This chain is Nucleoid-associated protein FMG_0513, found in Finegoldia magna (strain ATCC 29328 / DSM 20472 / WAL 2508) (Peptostreptococcus magnus).